A 498-amino-acid chain; its full sequence is Ribulose bisphosphate carboxylase large chain (498 aa).

A propeptide spanning residues 1-2 is cleaved from the precursor; that stretch reads MS. Pro3 carries the N-acetylproline modification. An N6,N6,N6-trimethyllysine modification is found at Lys14. Substrate-binding residues include Asn123 and Thr173. Lys175 acts as the Proton acceptor in catalysis. Lys177 is a substrate binding site. Residues Lys201, Asp203, and Glu204 each contribute to the Mg(2+) site. N6-carboxylysine is present on Lys201. Catalysis depends on His294, which acts as the Proton acceptor. Substrate-binding residues include Arg295, His327, and Ser379. The disordered stretch occupies residues 473-498; it reads DTLDPNDKKQRDNEDTLADKFFGDKG.

Belongs to the RuBisCO large chain family. Type I subfamily. Heterohexadecamer of 8 large chains and 8 small chains; disulfide-linked. The disulfide link is formed within the large subunit homodimers. Requires Mg(2+) as cofactor. In terms of processing, the disulfide bond which can form in the large chain dimeric partners within the hexadecamer appears to be associated with oxidative stress and protein turnover.

The protein resides in the plastid. The enzyme catalyses 2 (2R)-3-phosphoglycerate + 2 H(+) = D-ribulose 1,5-bisphosphate + CO2 + H2O. It catalyses the reaction D-ribulose 1,5-bisphosphate + O2 = 2-phosphoglycolate + (2R)-3-phosphoglycerate + 2 H(+). RuBisCO catalyzes two reactions: the carboxylation of D-ribulose 1,5-bisphosphate, the primary event in carbon dioxide fixation, as well as the oxidative fragmentation of the pentose substrate in the photorespiration process. Both reactions occur simultaneously and in competition at the same active site. In Cuscuta exaltata (Tall dodder), this protein is Ribulose bisphosphate carboxylase large chain.